A 211-amino-acid polypeptide reads, in one-letter code: DELTA-stichotoxin-Hmg2a (211 aa).

An N-terminal signal peptide occupies residues 1–19; the sequence is MNRLIVLFLIVTMICATIA. Residues 20 to 34 constitute a propeptide that is removed on maturation; it reads VPSREELEDQKEYKR. The tract at residues 37-46 is plays an important role in the hemolytic activity; that stretch reads ALAGTIIEGA. The N-terminal region stretch occupies residues 45 to 64; the sequence is GASLGFQILDKVLGELGKVS. Phosphocholine is bound by residues serine 88, valine 121, serine 139, proline 141, tyrosine 167, tyrosine 171, and tyrosine 172. Residues 139 to 154 are trp-rich region, which is important for the binding to lipid membrane; it reads SVPFDYNFYSNWWDVK. Residues 177–179 carry the Cell attachment site, crucial for protein stability motif; sequence RGD.

Belongs to the actinoporin family. Sea anemone subfamily. As to quaternary structure, octamer or nonamer in membranes. Monomer in the soluble state.

It is found in the secreted. The protein localises to the nematocyst. Its subcellular location is the target cell membrane. In terms of biological role, pore-forming protein that forms cations-selective hydrophilic pores of around 1 nm and causes cardiac stimulation and cytolysis. Pore formation is a multi-step process that involves specific recognition of membrane sphingomyelin (but neither cholesterol nor phosphatidylcholine) using aromatic rich region and adjacent phosphocholine (POC) binding site, firm binding to the membrane (mainly driven by hydrophobic interactions) accompanied by the transfer of the N-terminal region to the lipid-water interface and finally pore formation after oligomerization of monomers. The sequence is that of DELTA-stichotoxin-Hmg2a from Heteractis magnifica (Magnificent sea anemone).